A 121-amino-acid chain; its full sequence is Protein p14.5 (121 aa).

An N-acetylalanine; by host modification is found at alanine 2. Positions 84 to 121 (SLVPDEADNKPEDDEESGGAKPKKKKHLFPKLSSHKSK) are disordered. A compositionally biased stretch (basic residues) spans 104-121 (KPKKKKHLFPKLSSHKSK).

It belongs to the asfivirus structural protein p14.5 family. In terms of assembly, interacts with the major capsid protein. Interacts with host IRF3; this interaction interferes with the recruitment of IRF3 to TBK1. Acetylated.

The protein resides in the virion. Functionally, structural protein required for transport of intracellular particles from the assembly sites to the plasma membrane. Binds to both ssDNA and dsDNA. Suppressed the activation of the cGAS/STING pathway by interfering with the recruitment of IRF3 to TBK1, which in turn suppresses IRF3 phosphorylation, decreasing interferon production. This African swine fever virus (isolate Pig/Kenya/KEN-50/1950) (ASFV) protein is Protein p14.5.